The primary structure comprises 563 residues: Arginine--tRNA ligase (563 aa).

The protein belongs to the class-I aminoacyl-tRNA synthetase family. In terms of assembly, monomer.

The catalysed reaction is tRNA(Arg) + L-arginine + ATP = L-arginyl-tRNA(Arg) + AMP + diphosphate. This chain is Arginine--tRNA ligase, found in Encephalitozoon cuniculi (strain GB-M1) (Microsporidian parasite).